Here is a 726-residue protein sequence, read N- to C-terminus: Catalase-peroxidase (726 aa).

A cross-link (tryptophyl-tyrosyl-methioninium (Trp-Tyr) (with M-234)) is located at residues 85 to 208; sequence WHSAGSYRIH…FAATEMGLIY (124 aa). Catalysis depends on histidine 86, which acts as the Proton acceptor. Positions 208–234 form a cross-link, tryptophyl-tyrosyl-methioninium (Tyr-Met) (with W-85); the sequence is YVNPEGPMGNPDPSGSAKEIRLAFTRM. Histidine 249 is a binding site for heme b.

It belongs to the peroxidase family. Peroxidase/catalase subfamily. As to quaternary structure, homodimer or homotetramer. Requires heme b as cofactor. Formation of the three residue Trp-Tyr-Met cross-link is important for the catalase, but not the peroxidase activity of the enzyme.

It catalyses the reaction H2O2 + AH2 = A + 2 H2O. The enzyme catalyses 2 H2O2 = O2 + 2 H2O. In terms of biological role, bifunctional enzyme with both catalase and broad-spectrum peroxidase activity. In Pseudothermotoga lettingae (strain ATCC BAA-301 / DSM 14385 / NBRC 107922 / TMO) (Thermotoga lettingae), this protein is Catalase-peroxidase.